Reading from the N-terminus, the 305-residue chain is Ornithine carbamoyltransferase (305 aa).

Carbamoyl phosphate-binding positions include 47-50 (STRT), Arg98, and 125-128 (HPCQ). L-ornithine-binding positions include Asn156, Asp221, and 225-226 (SM). Carbamoyl phosphate-binding positions include 262-263 (CL) and Arg290.

It belongs to the aspartate/ornithine carbamoyltransferase superfamily. OTCase family.

Its subcellular location is the cytoplasm. It catalyses the reaction carbamoyl phosphate + L-ornithine = L-citrulline + phosphate + H(+). It functions in the pathway amino-acid biosynthesis; L-arginine biosynthesis; L-arginine from L-ornithine and carbamoyl phosphate: step 1/3. Its function is as follows. Reversibly catalyzes the transfer of the carbamoyl group from carbamoyl phosphate (CP) to the N(epsilon) atom of ornithine (ORN) to produce L-citrulline. This chain is Ornithine carbamoyltransferase, found in Methanococcus vannielii (strain ATCC 35089 / DSM 1224 / JCM 13029 / OCM 148 / SB).